The chain runs to 215 residues: Probable phosphoglycerate mutase GpmB (215 aa).

Substrate contacts are provided by residues 8–15, 21–22, arginine 58, arginine 60, 82–85, 104–105, and 151–152; these read RHGETQWN, QG, ELNM, RR, and GI. The active-site Tele-phosphohistidine intermediate is histidine 9. Catalysis depends on glutamate 82, which acts as the Proton donor/acceptor.

The protein belongs to the phosphoglycerate mutase family. GpmB subfamily.

The enzyme catalyses (2R)-2-phosphoglycerate = (2R)-3-phosphoglycerate. Its pathway is carbohydrate degradation; glycolysis; pyruvate from D-glyceraldehyde 3-phosphate: step 3/5. This is Probable phosphoglycerate mutase GpmB from Escherichia coli O1:K1 / APEC.